The following is a 450-amino-acid chain: ATP-dependent protease ATPase subunit HslU (450 aa).

Residues V29, 71-76 (GVGKTE), D261, E328, and R400 contribute to the ATP site.

This sequence belongs to the ClpX chaperone family. HslU subfamily. In terms of assembly, a double ring-shaped homohexamer of HslV is capped on each side by a ring-shaped HslU homohexamer. The assembly of the HslU/HslV complex is dependent on binding of ATP.

Its subcellular location is the cytoplasm. In terms of biological role, ATPase subunit of a proteasome-like degradation complex; this subunit has chaperone activity. The binding of ATP and its subsequent hydrolysis by HslU are essential for unfolding of protein substrates subsequently hydrolyzed by HslV. HslU recognizes the N-terminal part of its protein substrates and unfolds these before they are guided to HslV for hydrolysis. The chain is ATP-dependent protease ATPase subunit HslU from Rickettsia prowazekii (strain Madrid E).